We begin with the raw amino-acid sequence, 540 residues long: Putative actin-fragmin kinase DDB_G0287957 (540 aa).

Positions 27–68 (KNENLNIKNEILNNNNNNNNNKNNNNNNNNNNNIENNSKNEN) form a coiled coil. 2 disordered regions span residues 37–70 (ILNNNNNNNNNKNNNNNNNNNNNIENNSKNENFN) and 317–341 (NNNNNNNNNNNNNNNNNNNNNINNC).

The protein belongs to the protein kinase superfamily. AFK Ser/Thr protein kinase family.

The sequence is that of Putative actin-fragmin kinase DDB_G0287957 from Dictyostelium discoideum (Social amoeba).